The chain runs to 119 residues: NADH-quinone oxidoreductase subunit A (119 aa).

The next 3 helical transmembrane spans lie at 9 to 29 (VLLFILVGMGVGVVPLVLGYV), 63 to 83 (LVAILFILFDLEIAFLLPWAV), and 88 to 108 (VGGAGFAAVLIFLTVLVVGFV).

The protein belongs to the complex I subunit 3 family. NDH-1 is composed of 14 different subunits. Subunits NuoA, H, J, K, L, M, N constitute the membrane sector of the complex.

It is found in the cell inner membrane. The enzyme catalyses a quinone + NADH + 5 H(+)(in) = a quinol + NAD(+) + 4 H(+)(out). In terms of biological role, NDH-1 shuttles electrons from NADH, via FMN and iron-sulfur (Fe-S) centers, to quinones in the respiratory chain. The immediate electron acceptor for the enzyme in this species is believed to be ubiquinone. Couples the redox reaction to proton translocation (for every two electrons transferred, four hydrogen ions are translocated across the cytoplasmic membrane), and thus conserves the redox energy in a proton gradient. This Delftia acidovorans (strain DSM 14801 / SPH-1) protein is NADH-quinone oxidoreductase subunit A.